Reading from the N-terminus, the 811-residue chain is MADIIGGEVVTELVRQLYAVSQKTLRCRGIAKNLATMIDGLQPTIKEIQYSGVELTPHRQAQLRMFSETLDKCRKLTEKVLKSSRWNMVRQLLHVRKMENLQSKVSSFLNGQLLVHVLADVHHVRADSEFRFDRIDRKVDSLNEKLGSMKLRGSESLREALKTAEATVEMVTTDGADLGVGLDLGKRKVKEMLFKSIDGERLIGISGMSGSGKTTLAKELARDEEVRGHFGNKVLFLTVSQSPNLEELRAHIWGFLTSYEAGVGATLPESRKLVILDDVWTRESLDQLMFENIPGTTTLVVSRSKLADSRVTYDVELLNEHEATALFCLSVFNQKLVPSGFSQSLVKQVVGECKGLPLSLKVIGASLKERPEKYWEGAVERLSRGEPADETHESRVFAQIEATLENLDPKTRDCFLVLGAFPEDKKIPLDVLINVLVELHDLEDATAFAVIVDLANRNLLTLVKDPRFGHMYTSYYDIFVTQHDVLRDVALRLSNHGKVNNRERLLMPKRESMLPREWERNNDEPYKARVVSIHTGEMTQMDWFDMELPKAEVLILHFSSDKYVLPPFIAKMGKLTALVIINNGMSPARLHDFSIFTNLAKLKSLWLQRVHVPELSSSTVPLQNLHKLSLIFCKINTSLDQTELDIAQIFPKLSDLTIDHCDDLLELPSTICGITSLNSISITNCPRIKELPKNLSKLKALQLLRLYACHELNSLPVEICELPRLKYVDISQCVSLSSLPEKIGKVKTLEKIDTRECSLSSIPNSVVLLTSLRHVICDREALWMWEKVQKAVAGLRVEAAEKSFSRDWLDD.

Residues 1–147 (MADIIGGEVV…KVDSLNEKLG (147 aa)) enclose the RPW8 domain. NB-ARC domains lie at 180-242 (VGLD…VSQS) and 312-437 (TYDV…NVLV). ATP is bound at residue 207–214 (GMSGSGKT). 5 LRR repeats span residues 650-674 (FPKL…ICGI), 676-699 (SLNS…SKLK), 700-722 (ALQL…ICEL), 724-746 (RLKY…IGKV), and 748-769 (TLEK…VVLL).

This sequence belongs to the disease resistance NB-LRR family.

Probable disease resistance protein. The chain is Probable disease resistance protein At5g04720 from Arabidopsis thaliana (Mouse-ear cress).